The chain runs to 202 residues: LexA repressor (202 aa).

Residues 29–49 constitute a DNA-binding region (H-T-H motif); the sequence is VREICTAVGLKSTSTVHSYLE. Residues Ser-125 and Lys-162 each act as for autocatalytic cleavage activity in the active site.

It belongs to the peptidase S24 family. In terms of assembly, homodimer.

The catalysed reaction is Hydrolysis of Ala-|-Gly bond in repressor LexA.. Its function is as follows. Represses a number of genes involved in the response to DNA damage (SOS response), including recA and lexA. In the presence of single-stranded DNA, RecA interacts with LexA causing an autocatalytic cleavage which disrupts the DNA-binding part of LexA, leading to derepression of the SOS regulon and eventually DNA repair. The polypeptide is LexA repressor (Clostridium kluyveri (strain NBRC 12016)).